We begin with the raw amino-acid sequence, 133 residues long: ATP synthase epsilon chain, chloroplastic (133 aa).

The protein belongs to the ATPase epsilon chain family. F-type ATPases have 2 components, CF(1) - the catalytic core - and CF(0) - the membrane proton channel. CF(1) has five subunits: alpha(3), beta(3), gamma(1), delta(1), epsilon(1). CF(0) has three main subunits: a, b and c.

It localises to the plastid. The protein resides in the chloroplast thylakoid membrane. Functionally, produces ATP from ADP in the presence of a proton gradient across the membrane. This is ATP synthase epsilon chain, chloroplastic from Morus indica (Mulberry).